The primary structure comprises 149 residues: Heavy metal-associated isoprenylated plant protein 21 (149 aa).

The 64-residue stretch at 25–88 (LQTVDIKVKM…RVKSTGKKAE (64 aa)) folds into the HMA domain. A metal cation-binding residues include Cys-36 and Cys-39. Position 146 is a cysteine methyl ester (Cys-146). Residue Cys-146 is the site of S-farnesyl cysteine attachment. A propeptide spans 147–149 (SIM) (removed in mature form).

The protein belongs to the HIPP family. In terms of assembly, interacts with ZHD11/HB29. As to expression, expressed at low levels in leaves and sepals.

It localises to the membrane. Heavy-metal-binding protein. Binds cadmium. May be involved in cadmium transport and play a role in cadmium detoxification. The sequence is that of Heavy metal-associated isoprenylated plant protein 21 from Arabidopsis thaliana (Mouse-ear cress).